A 258-amino-acid chain; its full sequence is MSPAIALAFLPLVVTLLVRYRHHFRLLVRTVLLRSFRDCLSGLRIEERAFSYVITHALPGDPGHILTTLDHWSSCCEYLSHMGPIKGQILMRLVEEKAPACVLELGTHCGYSTLLIARALPPGSRLLTVERDSRTAAVAEKVIRLAGFDEQMVELIAGSSEEVIPRLRAQHQLNRADLVLLAHRPRYYLRDLQLLEAHALLPHGATVLADHVLFPGAPRFLQYTKSCGRYRCRLHHTSLPDFPAIKDGIAQLTYTGPG.

S-adenosyl-L-methionine contacts are provided by residues E104, 106–107, S112, E130, and S160; that span reads GT.

This sequence belongs to the class I-like SAM-binding methyltransferase superfamily. Cation-dependent O-methyltransferase family. As to quaternary structure, interacts with LHFPL5, PCDH15, TMC1, TMC2 and TMIE. Interacts directly with TMC1. The interaction of TOMT with TMC1 and TMC2 is required for the transportation of TMC1/2 into the stereocilia of hair cells.

The protein resides in the cytoplasm. It localises to the endoplasmic reticulum. The enzyme catalyses a catechol + S-adenosyl-L-methionine = a guaiacol + S-adenosyl-L-homocysteine + H(+). Its function is as follows. Catalyzes the O-methylation, and thereby the inactivation, of catecholamine neurotransmitters and catechol hormones. Required for auditory function. Component of the cochlear hair cell's mechanotransduction (MET) machinery. Involved in the assembly of the asymmetric tip-link MET complex. Required for transportation of TMC1 and TMC2 proteins into the mechanically sensitive stereocilia of the hair cells. The function in MET is independent of the enzymatic activity. This is Transmembrane O-methyltransferase homolog from Rattus norvegicus (Rat).